The primary structure comprises 434 residues: Homoserine dehydrogenase (434 aa).

NADPH contacts are provided by T13 and V14. Residues V14, A33, and A43 each contribute to the NAD(+) site. V14 provides a ligand contact to NADP(+). Position 45 (R45) interacts with NADPH. 3 residues coordinate NADP(+): R45, R46, and K103. Residue K103 coordinates NADPH. Residues E127, V130, G132, and I134 each contribute to the Na(+) site. NADP(+) is bound by residues G185 and E188. L-homoserine contacts are provided by E188 and D199. The Proton donor role is filled by K203. NADPH is bound at residue G300. G300 contacts NAD(+). G300 is an NADP(+) binding site. The 77-residue stretch at 353–429 (YLRIQAKDHP…GVSGPVVRIR (77 aa)) folds into the ACT domain.

It belongs to the homoserine dehydrogenase family. The cofactor is a metal cation.

The enzyme catalyses L-homoserine + NADP(+) = L-aspartate 4-semialdehyde + NADPH + H(+). It carries out the reaction L-homoserine + NAD(+) = L-aspartate 4-semialdehyde + NADH + H(+). It functions in the pathway amino-acid biosynthesis; L-methionine biosynthesis via de novo pathway; L-homoserine from L-aspartate: step 3/3. It participates in amino-acid biosynthesis; L-threonine biosynthesis; L-threonine from L-aspartate: step 3/5. Its activity is regulated as follows. Feedback inhibition by threonine. Functionally, catalyzes the conversion of L-aspartate-beta-semialdehyde (L-Asa) to L-homoserine (L-Hse), the third step in the biosynthesis of threonine and methionine from aspartate. The chain is Homoserine dehydrogenase (hom) from Pseudomonas aeruginosa (strain ATCC 15692 / DSM 22644 / CIP 104116 / JCM 14847 / LMG 12228 / 1C / PRS 101 / PAO1).